The primary structure comprises 165 residues: Basic leucine zipper 43 (165 aa).

The bZIP domain occupies 70–133; that stretch reads NERKQKRKIS…EKVIEENVQL (64 aa). Residues 72 to 93 form a basic motif region; the sequence is RKQKRKISNRESARRSRMRKQR. Positions 98–112 are leucine-zipper; sequence LWSQVMWLRDENHQL.

As to quaternary structure, forms heterodimers with BZIP34 and BZIP61.

It localises to the nucleus. Probable transcription factor involved in somatic embryogenesis. Acts as a positive regulator of BHLH109. The sequence is that of Basic leucine zipper 43 from Arabidopsis thaliana (Mouse-ear cress).